Here is a 410-residue protein sequence, read N- to C-terminus: Phospho-N-acetylmuramoyl-pentapeptide-transferase (410 aa).

The next 10 membrane-spanning stretches (helical) occupy residues Arg-27–Ile-47, Thr-77–Met-97, Leu-99–Gly-119, Leu-140–Asn-160, Pro-213–Ile-233, Gly-248–Ser-268, Ile-288–Tyr-308, Val-312–Leu-332, Phe-337–Val-357, and Val-389–Phe-409.

Belongs to the glycosyltransferase 4 family. MraY subfamily. It depends on Mg(2+) as a cofactor.

It localises to the cell inner membrane. It catalyses the reaction UDP-N-acetyl-alpha-D-muramoyl-L-alanyl-gamma-D-glutamyl-meso-2,6-diaminopimeloyl-D-alanyl-D-alanine + di-trans,octa-cis-undecaprenyl phosphate = di-trans,octa-cis-undecaprenyl diphospho-N-acetyl-alpha-D-muramoyl-L-alanyl-D-glutamyl-meso-2,6-diaminopimeloyl-D-alanyl-D-alanine + UMP. It participates in cell wall biogenesis; peptidoglycan biosynthesis. In terms of biological role, catalyzes the initial step of the lipid cycle reactions in the biosynthesis of the cell wall peptidoglycan: transfers peptidoglycan precursor phospho-MurNAc-pentapeptide from UDP-MurNAc-pentapeptide onto the lipid carrier undecaprenyl phosphate, yielding undecaprenyl-pyrophosphoryl-MurNAc-pentapeptide, known as lipid I. This chain is Phospho-N-acetylmuramoyl-pentapeptide-transferase, found in Protochlamydia amoebophila (strain UWE25).